Reading from the N-terminus, the 102-residue chain is Small ribosomal subunit protein uS10 (102 aa).

The protein belongs to the universal ribosomal protein uS10 family. Part of the 30S ribosomal subunit.

Functionally, involved in the binding of tRNA to the ribosomes. This chain is Small ribosomal subunit protein uS10, found in Pseudothermotoga lettingae (strain ATCC BAA-301 / DSM 14385 / NBRC 107922 / TMO) (Thermotoga lettingae).